Reading from the N-terminus, the 518-residue chain is UPF0288 protein Mbar_A0706 (518 aa).

This sequence belongs to the UPF0288 family.

The chain is UPF0288 protein Mbar_A0706 from Methanosarcina barkeri (strain Fusaro / DSM 804).